The primary structure comprises 272 residues: NADH-dependent L-xylulose reductase (272 aa).

The NADP(+) site is built by leucine 24 and aspartate 78. The Proton donor role is filled by serine 160. The NADP(+) site is built by tyrosine 175, lysine 179, and isoleucine 208. The active-site Proton acceptor is tyrosine 175. Lysine 179 acts as the Lowers pKa of active site Tyr in catalysis.

The protein belongs to the short-chain dehydrogenases/reductases (SDR) family.

It carries out the reaction xylitol + NAD(+) = L-xylulose + NADH + H(+). The enzyme catalyses D-arabinitol + NAD(+) = D-ribulose + NADH + H(+). Its function is as follows. NADH-dependent L-xylulose reductase; part of the yeast pathway for L-arabinose catabolism. Reversibly converts L-xylulose to xylitol and D-ribulose to D-arabinitol. It has a much lower activity with D-xylulose. Sugar alcohols can serve as a substrate when the hydroxyl group of C-2 is in the L- and the hydroxyl group of the C-3 is in the D-configuration. Also seems to be specific for sugar alcohols that have not more than 5 carbons since no activity is observed with dulcitol (galactitol), which has the hydroxyl group of C-2 in L- and of C-3 in D-configuration, but is a six-carbon sugar alcohol. This is NADH-dependent L-xylulose reductase from Ambrosiozyma monospora (Yeast).